Reading from the N-terminus, the 462-residue chain is Syringate O-demethylase (462 aa).

Belongs to the GcvT family.

It carries out the reaction syringate + (6S)-5,6,7,8-tetrahydrofolate = 3-O-methylgallate + (6S)-5-methyl-5,6,7,8-tetrahydrofolate. The protein operates within secondary metabolite metabolism; lignin degradation. In terms of biological role, involved in the catabolism of syringate. Catalyzes the conversion of syringate to 3-O-methylgallate (3MGA) in the presence of tetrahydrofolate. Has weak activity with vanillate and 3-O-methylgallate. In Sphingobium sp. (strain NBRC 103272 / SYK-6), this protein is Syringate O-demethylase.